Consider the following 207-residue polypeptide: Ion-translocating oxidoreductase complex subunit G (207 aa).

Residues 11 to 31 (GILLGFIALLCTIISTGIFFL) traverse the membrane as a helical segment. Thr175 is subject to FMN phosphoryl threonine.

This sequence belongs to the RnfG family. As to quaternary structure, the complex is composed of six subunits: RnfA, RnfB, RnfC, RnfD, RnfE and RnfG. FMN serves as cofactor.

It is found in the cell inner membrane. Part of a membrane-bound complex that couples electron transfer with translocation of ions across the membrane. This is Ion-translocating oxidoreductase complex subunit G from Haemophilus influenzae (strain 86-028NP).